A 204-amino-acid polypeptide reads, in one-letter code: Minor allergen Cla h 7 (204 aa).

The region spanning 5–195 (IAIIFYSTWG…ELTAQGKAFY (191 aa)) is the Flavodoxin-like domain.

Belongs to the WrbA family.

It is found in the cytoplasm. The chain is Minor allergen Cla h 7 (CLAH7) from Davidiella tassiana (Mycosphaerella tassiana).